Reading from the N-terminus, the 393-residue chain is MWSSLNDWLWNERLWLPANISWAQLEDHDGLVFPHPQDTLMAVPLALALVVVRFTFERFVALPLSRWLGVRNQIRRPADPNATLEKHYLMKGREPTESQMNLLATQCGLTLRQTQCWFRRRRNQDRPCLTKKFCESSWKFVFYLCCFVCGTMVLYHESWLWTPVKCWENYPHQPLKPGLYHWYLLELSFYISLLMTLPFDTKRKDFKEQVIHHFVTIILISFSYSLNLLRIGSLVLLLHDSADYLLEASKLFNYMHWRRMCDTLFIIFSLVFFYTRLVLFPTRILYTTFFESIGNFSPFFGYYFLNILLVILQLLHVFWSWLILCMIYSFIKKGQMEKDVRSDVEELDSSDGEAAEECPQMKNGAAQRPGAAPTDGPRSRAAGRMVNRHTPAT.

The Lumenal portion of the chain corresponds to 1–31 (MWSSLNDWLWNERLWLPANISWAQLEDHDGL). Residue asparagine 19 is glycosylated (N-linked (GlcNAc...) asparagine). The chain crosses the membrane as a helical span at residues 32–52 (VFPHPQDTLMAVPLALALVVV). A homeobox-like region spans residues 67–128 (WLGVRNQIRR…RRRRNQDRPC (62 aa)). The 202-residue stretch at 131–332 (KKFCESSWKF…ILCMIYSFIK (202 aa)) folds into the TLC domain. A run of 4 helical transmembrane segments spans residues 140-160 (FVFY…ESWL), 179-199 (LYHW…TLPF), 209-229 (QVIH…LNLL), and 260-280 (MCDT…LVLF). The short motif at 291–301 (ESIGNFSPFFG) is the Last loop motif element. The helical transmembrane segment at 304 to 324 (FLNILLVILQLLHVFWSWLIL) threads the bilayer. Over 325 to 393 (CMIYSFIKKG…RMVNRHTPAT (69 aa)) the chain is Cytoplasmic. Serine 342, serine 349, and serine 350 each carry phosphoserine. The segment covering 346–356 (ELDSSDGEAAE) has biased composition (acidic residues). The disordered stretch occupies residues 346–393 (ELDSSDGEAAEECPQMKNGAAQRPGAAPTDGPRSRAAGRMVNRHTPAT).

In terms of processing, phosphorylated at the C-terminus by CK2.

The protein resides in the endoplasmic reticulum membrane. It catalyses the reaction sphinganine + octadecanoyl-CoA = N-(octadecanoyl)-sphinganine + CoA + H(+). The catalysed reaction is eicosanoyl-CoA + sphinganine = N-eicosanoylsphinganine + CoA + H(+). It carries out the reaction docosanoyl-CoA + sphinganine = N-docosanoylsphinganine + CoA + H(+). The enzyme catalyses tetracosanoyl-CoA + sphinganine = N-tetracosanoylsphinganine + CoA + H(+). It catalyses the reaction hexacosanoyl-CoA + sphinganine = N-hexacosanoylsphinganine + CoA + H(+). The catalysed reaction is a fatty acyl-CoA + sphing-4-enine = an N-acylsphing-4-enine + CoA + H(+). It carries out the reaction sphing-4-enine + octadecanoyl-CoA = N-octadecanoylsphing-4-enine + CoA + H(+). The enzyme catalyses hexadecasphinganine + octadecanoyl-CoA = N-octadecanoylhexadecasphinganine + CoA + H(+). Its pathway is lipid metabolism; sphingolipid metabolism. Functionally, ceramide synthase that catalyzes formation of ceramide from sphinganine and acyl-CoA substrates, with high selectivity toward long and very-long chains (C18:0-C22:0) as acyl donor. This is Ceramide synthase 4 from Bos taurus (Bovine).